Consider the following 169-residue polypeptide: Peptide methionine sulfoxide reductase MsrA (169 aa).

Residue C10 is part of the active site.

This sequence belongs to the MsrA Met sulfoxide reductase family.

The catalysed reaction is L-methionyl-[protein] + [thioredoxin]-disulfide + H2O = L-methionyl-(S)-S-oxide-[protein] + [thioredoxin]-dithiol. It catalyses the reaction [thioredoxin]-disulfide + L-methionine + H2O = L-methionine (S)-S-oxide + [thioredoxin]-dithiol. In terms of biological role, has an important function as a repair enzyme for proteins that have been inactivated by oxidation. Catalyzes the reversible oxidation-reduction of methionine sulfoxide in proteins to methionine. The polypeptide is Peptide methionine sulfoxide reductase MsrA (Streptococcus pyogenes serotype M3 (strain ATCC BAA-595 / MGAS315)).